The chain runs to 68 residues: Protein transport protein Sec61 subunit gamma (68 aa).

Over 1–32 (MDQVMQFVEPSRQFVKDSIRLVKRCTKPDRKE) the chain is Cytoplasmic. Residues 33 to 61 (FQKIAMATAIGFAIMGFIGFFVKLIHIPI) traverse the membrane as a helical segment. The Extracellular portion of the chain corresponds to 62 to 68 (NNIIVGS).

This sequence belongs to the SecE/SEC61-gamma family. As to quaternary structure, the SEC61 channel-forming translocon complex consists of channel-forming core components SEC61A1, SEC61B and SEC61G and different auxiliary components such as SEC62 and SEC63. The SEC61 channel associates with the multi-pass translocon (MPT) complex.

The protein resides in the endoplasmic reticulum membrane. Its function is as follows. Component of SEC61 channel-forming translocon complex that mediates transport of signal peptide-containing precursor polypeptides across the endoplasmic reticulum (ER). Forms a ribosome receptor and a gated pore in the ER membrane, both functions required for cotranslational translocation of nascent polypeptides. The SEC61 channel is also involved in ER membrane insertion of transmembrane proteins: it mediates membrane insertion of the first few transmembrane segments of proteins, while insertion of subsequent transmembrane regions of multi-pass membrane proteins is mediated by the multi-pass translocon (MPT) complex. This Xenopus laevis (African clawed frog) protein is Protein transport protein Sec61 subunit gamma (sec61g).